The following is a 441-amino-acid chain: uncharacterized protein (441 aa).

11 helical membrane-spanning segments follow: residues 68-88 (MAIA…GPFA), 110-130 (ALIA…PLLV), 131-151 (GALV…AALP), 164-184 (SVAI…MLLP), 194-214 (GASA…LWSL), 229-246 (AIHG…LHGA), 260-280 (SGLA…LLLV), 287-307 (AVGG…GAFL), 337-357 (VAAA…LGVA), 384-404 (VQDA…AALI), and 412-432 (VFVL…TIVG).

The protein belongs to the major facilitator superfamily.

The protein resides in the cell membrane. This is an uncharacterized protein from Mycobacterium tuberculosis (strain ATCC 25618 / H37Rv).